A 1287-amino-acid polypeptide reads, in one-letter code: DNA-directed RNA polymerase 147 kDa polypeptide (1287 aa).

It belongs to the poxviridae DNA-directed RNA polymerase 147 kDa subunit family. In terms of assembly, the DNA-dependent RNA polymerase used for intermediate and late genes expression consists of eight subunits Rpo30/OPG66, Rpo7/OPG90, Rpo22/OPG103, Rpo147/OPG105, Rpo18/OPG119, Rpo19/OPG131, Rpo132/OPG151 and Rpo35/OPG156. The same holoenzyme, with the addition of the transcription-specificity factor OPG109, is used for early gene expression.

It localises to the virion. It carries out the reaction RNA(n) + a ribonucleoside 5'-triphosphate = RNA(n+1) + diphosphate. In terms of biological role, part of the DNA-dependent RNA polymerase which catalyzes the transcription of viral DNA into RNA using the four ribonucleoside triphosphates as substrates. Responsible for the transcription of early, intermediate and late genes. DNA-dependent RNA polymerase associates with the early transcription factor (ETF), itself composed of OPG118 and OPG133, thereby allowing the early genes transcription. Late transcription, and probably also intermediate transcription, require newly synthesized RNA polymerase. This Bos taurus (Bovine) protein is DNA-directed RNA polymerase 147 kDa polypeptide (OPG105).